A 993-amino-acid chain; its full sequence is MKENNKILQLIYVAWRERWTDSQWGINIKKVLPRGVSGDVYNLADCLMQQALIGSTANPLVLNYLKHSLCAHLVSHAAVIRCIAKYDKLERVYCITALLEFLASIVDGVTCRIKSEEAVLPSSVVHLVYWLLQIFARTVQHYELYGEISAEQSYMLDQTCVVIDRLSQQQFLLSMLYVGCHEELEICGRIRDKYATIKGSLTNSNFTLNAPQVEQQLQQLAFIEAKHLEMQPLNPPSTLEKISCCVQPLLAVEVLLNPCKDTSYYVAELQMLQRLKKYSNTRLFYEIIRAGFLTLSNVADTSPDTMWGAFMFFKMPHIIKQLHALQRIPGEQPPPADYIPELVEALELLIEDNLLLDFMDTKCSCNMIEFLLNDWTKQQLVNDVHVKKFASQREAASQLLKKCDNGQQTPSNINFIKRAEVPLSGVLKTLCTNKVQDMVNVLCQVPVGNSFELILSVATVEGRLKTFVSRLIQCNENSKPVPGDLGKLCVIRSTLFDVSFLMLTSIVQTYGSDVVLSERGDSFFEKWVRECMVERNKLKNPRQILALCDDSIVDELLLSFSKPEASQLKPNNLSWQETCLNLPGVLHHVLIAWEQETLSSADVKSILDNIKRRLFSFSVCATSFLCAYMYSVKETELLKPLNMIQQFLAPLTSEELSSQENAKERLALSYQIIRKMQHDVHPAPSTKSRLISHSPLVEQFREVWRTVVDAGHLPVRAAQSLESLLLAGGAAWLSTQLVEQLLACKYTRDMSRTMDVVFAVMHLDIEKTTEALLQYVVAPLILRRQGEDINEPQSLVLARLCVYCIISCLESRKGNGTSALTAMKKRSRSHDDEELAANAAKVRKVIGDGSDNSSDFTDTTTGAGLAALLGSTSTSELRTTPLTLREPLQTSVQHIFAVFLQFVSGDELSPKAVFVYQFISLLVECGGERVAPVLRLLPNGLVQQLLKVLVTDDIKVGLISRLYDLRIQAGRLSAVSDLCLWRNMQMARHSIHL.

A phosphoserine mark is found at S827 and S829.

Belongs to the Mediator complex subunit 24 family. In terms of assembly, component of the Mediator complex, which includes at least CDK8, MED4, MED6, MED11, MED14, MED17, MED18, MED20, MED21, MED22, MED27, MED28, MED30 and MED31.

The protein resides in the nucleus. Its function is as follows. Component of the Mediator complex, a coactivator involved in the regulated transcription of nearly all RNA polymerase II-dependent genes. Mediator functions as a bridge to convey information from gene-specific regulatory proteins to the basal RNA polymerase II transcription machinery. Mediator is recruited to promoters by direct interactions with regulatory proteins and serves as a scaffold for the assembly of a functional preinitiation complex with RNA polymerase II and the general transcription factors. Required for activated transcription of the MtnA, MtnB and MtnD genes. The protein is Mediator of RNA polymerase II transcription subunit 24 (MED24) of Drosophila melanogaster (Fruit fly).